Reading from the N-terminus, the 612-residue chain is Glutamine--fructose-6-phosphate aminotransferase [isomerizing] (612 aa).

The active-site Nucleophile; for GATase activity is cysteine 2. Residues cysteine 2–aspartate 220 form the Glutamine amidotransferase type-2 domain. 2 consecutive SIS domains span residues alanine 288–leucine 428 and tryptophan 461–proline 602. The active-site For Fru-6P isomerization activity is the lysine 607.

Homodimer.

It is found in the cytoplasm. The enzyme catalyses D-fructose 6-phosphate + L-glutamine = D-glucosamine 6-phosphate + L-glutamate. Catalyzes the first step in hexosamine metabolism, converting fructose-6P into glucosamine-6P using glutamine as a nitrogen source. In Neisseria meningitidis serogroup A / serotype 4A (strain DSM 15465 / Z2491), this protein is Glutamine--fructose-6-phosphate aminotransferase [isomerizing].